The chain runs to 500 residues: NAD(P)H-quinone oxidoreductase chain 4, chloroplastic (500 aa).

Transmembrane regions (helical) follow at residues 4–24, 37–57, 87–107, 113–130, 134–154, 167–187, 207–227, 242–262, 272–292, 305–325, 330–350, 386–406, 411–431, and 462–482; these read FPWLTIIVVLPISAGSLIFFL, ICICVLELLLTTYAFCYHFQL, IGPILLTGFITTLATLAAWPV, LFHFLMLAMYSGQIGSFS, LLLFFLMWELELIPVYLLLSM, FILYTAGGSIFLLIGVLGIGL, IALEIIFYIGFLIAFAVKSPI, HYSTCMLLAGILLKMGAYGLV, AHSLFSPWLVVVGTMQIIYAA, IAYSSVSHMGFIIIGIGSITD, GAILQIVSHGFIGAALFFLAG, LALPGMSGFVAELIVFFGIIT, FLMAKILITFVMAIGMILTPI, and LFVSISILLPVIGIGIYPDFL.

This sequence belongs to the complex I subunit 4 family.

Its subcellular location is the plastid. The protein localises to the chloroplast thylakoid membrane. The enzyme catalyses a plastoquinone + NADH + (n+1) H(+)(in) = a plastoquinol + NAD(+) + n H(+)(out). It carries out the reaction a plastoquinone + NADPH + (n+1) H(+)(in) = a plastoquinol + NADP(+) + n H(+)(out). The polypeptide is NAD(P)H-quinone oxidoreductase chain 4, chloroplastic (Carica papaya (Papaya)).